A 118-amino-acid chain; its full sequence is Actin depolymerizing factor ADF (118 aa).

Residues 4-118 (GMGVDENCVA…HEMGDLAPLA (115 aa)) enclose the ADF-H domain.

Belongs to the actin-binding proteins ADF family. Interacts with ACT1 (G-actin); the interaction results in inhibition of actin polymerization. Interacts with DPA; the interaction enhances ADF activity in disassembly of filamentous actin and inhibition of actin polymerization.

The protein localises to the cytoplasm. In terms of biological role, inhibits actin polymerization. Promotes actin depolymerization. Strongly sequesters actin monomers (G-actin). Weakly severs actin filaments (F-actin). This is Actin depolymerizing factor ADF from Toxoplasma gondii.